Consider the following 1561-residue polypeptide: ABC-type transporter phomO' (1561 aa).

7 consecutive transmembrane segments (helical) span residues 34 to 54 (LYFEEVVFVLVPSCVFILLAA), 110 to 130 (CTAGLLVTLHVAGLILLCTTV), 139 to 159 (SVPASVVAALAFGVVPVLAHF), 172 to 192 (SSSLLVGLFLCVAVLLRAPLV), 202 to 222 (GSALVAVEIASLVLQLVLIAV), 314 to 334 (LGLYALAPVIPRLCLAGFTLA), and 358 to 378 (GLIGATFLIYTGIAVSTGWYW). One can recognise an ABC transmembrane type-1 1 domain in the interval 326–599 (LCLAGFTLAQ…LLQIIPSFGA (274 aa)). The N-linked (GlcNAc...) asparagine glycan is linked to asparagine 384. The next 4 membrane-spanning stretches (helical) occupy residues 428 to 448 (LAYAHELWVAPIETAIGTWML), 452 to 472 (VGPPGLVVLGIIGVCLGTSTY), 535 to 555 (LIVGTLLSSYSTATLAPVLVF), and 577 to 597 (LIWISLLASPLIQLLQIIPSF). In terms of domain architecture, ABC transporter 1 spans 645-871 (IHNSSFSYTD…VEDENGDVDN (227 aa)). Asparagine 647 carries N-linked (GlcNAc...) asparagine glycosylation. Residue 678–685 (GPAGCGKS) coordinates ATP. The N-linked (GlcNAc...) asparagine glycan is linked to asparagine 721. Residues 853–899 (YQFPPSQADVEDENGDVDNGAENTRPRESSHTTEAQSGPPEPKSKPT) are disordered. Transmembrane regions (helical) follow at residues 913 to 933 (SIGFLNLVLFIGGGIIFAFCL), 969 to 989 (VLPLIAVAGWVAQLMMLIVPL), 1037 to 1054 (LFNTAAALLTGIAQVILI), and 1147 to 1167 (LVLNLVVAGLALVVMGAAVGL). Residues 920 to 1209 (VLFIGGGIIF…LLTAWTSLET (290 aa)) enclose the ABC transmembrane type-1 2 domain. Asparagine 1189 is a glycosylation site (N-linked (GlcNAc...) asparagine). Over residues 1229-1238 (DVLVRPDSLD) the composition is skewed to basic and acidic residues. Residues 1229-1298 (DVLVRPDSLD…DVAADGEKHE (70 aa)) are disordered. The span at 1269-1280 (YDDDDESDENTD) shows a compositional bias: acidic residues. In terms of domain architecture, ABC transporter 2 spans 1297–1545 (HEATTITTTS…SDIFAFFGRS (249 aa)). Residue 1333–1340 (GRTGSGKS) coordinates ATP. N-linked (GlcNAc...) asparagine glycosylation is present at asparagine 1496.

Belongs to the ABC transporter superfamily. ABCC family. Conjugate transporter (TC 3.A.1.208) subfamily.

The protein localises to the membrane. Functionally, ABC-type transporter; part of the gene cluster that mediates the biosynthesis of the phomopsins, a group of hexapeptide mycotoxins which infects lupins and causes lupinosis disease in livestock. This chain is ABC-type transporter phomO', found in Diaporthe leptostromiformis (Lupinosis disease fungus).